Here is a 189-residue protein sequence, read N- to C-terminus: UPF0149 protein VF_2102 (189 aa).

This sequence belongs to the UPF0149 family.

The sequence is that of UPF0149 protein VF_2102 from Aliivibrio fischeri (strain ATCC 700601 / ES114) (Vibrio fischeri).